The primary structure comprises 65 residues: Large ribosomal subunit protein bL33m (65 aa).

The transit peptide at 1 to 8 (MFLSAVTF) directs the protein to the mitochondrion.

It belongs to the bacterial ribosomal protein bL33 family. As to quaternary structure, component of the mitochondrial ribosome large subunit (39S) which comprises a 16S rRNA and about 50 distinct proteins.

The protein localises to the mitochondrion. This Bos taurus (Bovine) protein is Large ribosomal subunit protein bL33m (MRPL33).